The following is a 34-amino-acid chain: uncharacterized protein (34 aa).

A disordered region spans residues Met1–Asp34. The segment covering Gly25–Asp34 has biased composition (basic residues).

This is an uncharacterized protein from Schizosaccharomyces pombe (strain 972 / ATCC 24843) (Fission yeast).